A 306-amino-acid polypeptide reads, in one-letter code: GTP cyclohydrolase FolE2 (306 aa).

Belongs to the GTP cyclohydrolase IV family.

The catalysed reaction is GTP + H2O = 7,8-dihydroneopterin 3'-triphosphate + formate + H(+). It functions in the pathway cofactor biosynthesis; 7,8-dihydroneopterin triphosphate biosynthesis; 7,8-dihydroneopterin triphosphate from GTP: step 1/1. In terms of biological role, converts GTP to 7,8-dihydroneopterin triphosphate. In Xanthomonas oryzae pv. oryzae (strain MAFF 311018), this protein is GTP cyclohydrolase FolE2.